Reading from the N-terminus, the 445-residue chain is UDP-N-acetylmuramoylalanine--D-glutamate ligase (445 aa).

G110–T116 contacts ATP.

This sequence belongs to the MurCDEF family.

The protein resides in the cytoplasm. It carries out the reaction UDP-N-acetyl-alpha-D-muramoyl-L-alanine + D-glutamate + ATP = UDP-N-acetyl-alpha-D-muramoyl-L-alanyl-D-glutamate + ADP + phosphate + H(+). The protein operates within cell wall biogenesis; peptidoglycan biosynthesis. Cell wall formation. Catalyzes the addition of glutamate to the nucleotide precursor UDP-N-acetylmuramoyl-L-alanine (UMA). This is UDP-N-acetylmuramoylalanine--D-glutamate ligase from Christiangramia forsetii (strain DSM 17595 / CGMCC 1.15422 / KT0803) (Gramella forsetii).